Consider the following 150-residue polypeptide: Cell division protein SepF (150 aa).

The protein belongs to the SepF family. As to quaternary structure, homodimer. Interacts with FtsZ.

The protein localises to the cytoplasm. Cell division protein that is part of the divisome complex and is recruited early to the Z-ring. Probably stimulates Z-ring formation, perhaps through the cross-linking of FtsZ protofilaments. Its function overlaps with FtsA. In Clostridium kluyveri (strain NBRC 12016), this protein is Cell division protein SepF.